Here is a 312-residue protein sequence, read N- to C-terminus: tRNA-cytidine(32) 2-sulfurtransferase (312 aa).

Positions 47 to 52 match the PP-loop motif motif; that stretch reads SGGKDS. [4Fe-4S] cluster contacts are provided by C122, C125, and C213.

It belongs to the TtcA family. In terms of assembly, homodimer. Mg(2+) is required as a cofactor. Requires [4Fe-4S] cluster as cofactor.

It is found in the cytoplasm. The catalysed reaction is cytidine(32) in tRNA + S-sulfanyl-L-cysteinyl-[cysteine desulfurase] + AH2 + ATP = 2-thiocytidine(32) in tRNA + L-cysteinyl-[cysteine desulfurase] + A + AMP + diphosphate + H(+). It functions in the pathway tRNA modification. In terms of biological role, catalyzes the ATP-dependent 2-thiolation of cytidine in position 32 of tRNA, to form 2-thiocytidine (s(2)C32). The sulfur atoms are provided by the cysteine/cysteine desulfurase (IscS) system. This Actinobacillus succinogenes (strain ATCC 55618 / DSM 22257 / CCUG 43843 / 130Z) protein is tRNA-cytidine(32) 2-sulfurtransferase.